A 330-amino-acid polypeptide reads, in one-letter code: MKTAYIAKQRQISFVKSHFSRQLEERLGLIEVQAPILSRVGDGTQDNLSGCEKAVQVKVKALPDAQFEVVHSLAKWKRQTLGQHDFSAGEGLYTHMKALRPDEDRLSPLHSVYVDQWDWERVMGDGERQFSTLKSTVEAIWEGIKATEAAVSEEFGLAPFLPDQIHFVHSQELLSRYPDLDAKGRERAIAKDLGAVFLVGIGGKLSDGHRHDVRAPDYDDWSTPSELGHAGLNGDILVWNPVLEDAFELSSMGIRVDADTLKHQLALTGDEDRLQLEWHQALLRGEMPQTIGGGIGQSRLTMLLLQLPHIGQVQCGVWPAAVRESVPSLL.

Belongs to the class-II aminoacyl-tRNA synthetase family. AsnA subfamily.

It localises to the cytoplasm. It catalyses the reaction L-aspartate + NH4(+) + ATP = L-asparagine + AMP + diphosphate + H(+). It participates in amino-acid biosynthesis; L-asparagine biosynthesis; L-asparagine from L-aspartate (ammonia route): step 1/1. This is Aspartate--ammonia ligase from Escherichia coli O17:K52:H18 (strain UMN026 / ExPEC).